We begin with the raw amino-acid sequence, 170 residues long: uncharacterized protein (170 aa).

The tract at residues 35–57 (EEVMPATAPSTDPAVPKDAQEAD) is disordered.

This is an uncharacterized protein from Candida tsukubaensis (Yeast).